Here is a 362-residue protein sequence, read N- to C-terminus: Inactive 2'-5' oligoadenylate synthetase 1C (362 aa).

The protein belongs to the 2-5A synthase family. In terms of tissue distribution, expressed at highest level in brain with lesser amounts in spleen, kidney, stomach, liver, intestine, ovary, skin and testis. Not detected in lung, thymus, heart and uterus.

Functionally, does not have 2'-5'-OAS activity, but can bind double-stranded RNA. This chain is Inactive 2'-5' oligoadenylate synthetase 1C, found in Mus musculus (Mouse).